The sequence spans 307 residues: Putative serpin A13 (307 aa).

An N-terminal signal peptide occupies residues 1-21 (MEASRWWLLVTVLMAGAHCVA). Residues asparagine 150 and asparagine 250 are each glycosylated (N-linked (GlcNAc...) asparagine).

It belongs to the serpin family.

Its subcellular location is the secreted. This is Putative serpin A13 (SERPINA13P) from Homo sapiens (Human).